The sequence spans 126 residues: Adenosine 5'-monophosphoramidase HINT1 (126 aa).

The residue at position 2 (alanine 2) is an N-acetylalanine. The HIT domain occupies isoleucine 18–glycine 126. N6-acetyllysine occurs at positions 21 and 30. Aspartate 43–isoleucine 44 serves as a coordination point for AMP. Serine 45 and serine 72 each carry phosphoserine. Residues asparagine 99, glycine 105 to serine 107, and histidine 112 to histidine 114 contribute to the AMP site. Residues histidine 110 to histidine 114 carry the Histidine triad motif motif. The active-site Tele-AMP-histidine intermediate is the histidine 112.

Belongs to the HINT family. As to quaternary structure, homodimer. Interacts with CDK7. Interacts with RUVBL1 and RUVBL2 and is associated with the LEF1/TCF1-CTNNB1 complex and with a KAT5 histone acetyltransferase complex. Identified in a complex with MITF and CTNNB1. Interacts with CDC34 and RBX1, and is part of a SCF (SKP2-CUL1-F-box protein) E3 ubiquitin-protein ligase complex. Interacts with SUMO1, SUMO2 and RGS17. Interacts with the Ten-1 ICD form of TENM1. Interacts with CALM1; interaction increases in the presence of calcium ions. In terms of tissue distribution, widely expressed.

It is found in the cytoplasm. It localises to the nucleus. The catalysed reaction is adenosine 5'-phosphoramidate + H2O = AMP + NH4(+). Exhibits adenosine 5'-monophosphoramidase activity, hydrolyzing purine nucleotide phosphoramidates with a single phosphate group such as adenosine 5'monophosphoramidate (AMP-NH2) to yield AMP and NH2. Hydrolyzes adenosine 5'monophosphomorpholidate (AMP-morpholidate) and guanosine 5'monophosphomorpholidate (GMP-morpholidate). Hydrolyzes lysyl-AMP (AMP-N-epsilon-(N-alpha-acetyl lysine methyl ester)) generated by lysine tRNA ligase. Hydrolyzes Met-AMP, His-AMP, Asp-AMP, lysyl-GMP (GMP-N-epsilon-(N-alpha-acetyl lysine methyl ester)) and AMP-N-alanine methyl ester. Can also convert adenosine 5'-O-phosphorothioate and guanosine 5'-O-phosphorothioate to the corresponding nucleoside 5'-O-phosphates with concomitant release of hydrogen sulfide. In addition, functions as a scaffolding protein that modulates transcriptional activation by the LEF1/TCF1-CTNNB1 complex and by the complex formed with MITF and CTNNB1. Modulates p53/TP53 levels and p53/TP53-mediated apoptosis. Modulates proteasomal degradation of target proteins by the SCF (SKP2-CUL1-F-box protein) E3 ubiquitin-protein ligase complex. Also exhibits SUMO-specific isopeptidase activity, deconjugating SUMO1 from RANGAP1 and RGS17. This is Adenosine 5'-monophosphoramidase HINT1 (HINT1) from Oryctolagus cuniculus (Rabbit).